A 134-amino-acid polypeptide reads, in one-letter code: Translation initiation factor 2 subunit beta (134 aa).

Belongs to the eIF-2-beta/eIF-5 family. Heterotrimer composed of an alpha, a beta and a gamma chain.

Functionally, eIF-2 functions in the early steps of protein synthesis by forming a ternary complex with GTP and initiator tRNA. The chain is Translation initiation factor 2 subunit beta from Pyrobaculum aerophilum (strain ATCC 51768 / DSM 7523 / JCM 9630 / CIP 104966 / NBRC 100827 / IM2).